Consider the following 295-residue polypeptide: NADPH-dependent reductive aminase (295 aa).

An N-terminal signal peptide occupies residues 1 to 18; the sequence is MSKHIGIFGLGAMGTALA. 6–20 serves as a coordination point for NADP(+); the sequence is GIFGLGAMGTALAAK.

The protein belongs to the HIBADH-related family. As to quaternary structure, homodimer. Requires NADPH as cofactor.

Its function is as follows. NADPH-dependent reductive aminase that catalyzes the reductive coupling of a broad set of carbonyl compounds with a variety of primary and secondary amines. Possesses remarkably high activity for the reductive amination of ketones and amines, often with high stereoselectivity and in some cases with ketone:amine ratios as low as 1:1. The cofactor NADPH, the carbonyl compound and the amine are added to the enzyme in that sequence, followed by the release of product, NADP(+) being released at last. RedAm is also able to act in the reverse, oxidative direction and exhibits activity in the dehydrogenation of amines to yield imines. The highest activity is found for 1-methyl-tetrahydroquinoline and acyclic amines are also found to be transformed. The protein is NADPH-dependent reductive aminase of Aspergillus oryzae (strain ATCC 42149 / RIB 40) (Yellow koji mold).